Consider the following 620-residue polypeptide: 1-deoxy-D-xylulose-5-phosphate synthase (620 aa).

Thiamine diphosphate contacts are provided by residues His80 and 121 to 123 (GHS). A Mg(2+)-binding site is contributed by Asp152. Thiamine diphosphate-binding positions include 153–154 (GA), Asn181, Tyr288, and Glu370. Residue Asn181 coordinates Mg(2+).

The protein belongs to the transketolase family. DXPS subfamily. In terms of assembly, homodimer. Mg(2+) is required as a cofactor. The cofactor is thiamine diphosphate.

The enzyme catalyses D-glyceraldehyde 3-phosphate + pyruvate + H(+) = 1-deoxy-D-xylulose 5-phosphate + CO2. Its pathway is metabolic intermediate biosynthesis; 1-deoxy-D-xylulose 5-phosphate biosynthesis; 1-deoxy-D-xylulose 5-phosphate from D-glyceraldehyde 3-phosphate and pyruvate: step 1/1. Its function is as follows. Catalyzes the acyloin condensation reaction between C atoms 2 and 3 of pyruvate and glyceraldehyde 3-phosphate to yield 1-deoxy-D-xylulose-5-phosphate (DXP). The chain is 1-deoxy-D-xylulose-5-phosphate synthase from Salmonella arizonae (strain ATCC BAA-731 / CDC346-86 / RSK2980).